Reading from the N-terminus, the 395-residue chain is Elongation factor Tu (395 aa).

The 195-residue stretch at 10-204 (KPHVNIGTIG…EVDAYIPTPE (195 aa)) folds into the tr-type G domain. A G1 region spans residues 19-26 (GHVDHGKT). 19–26 (GHVDHGKT) lines the GTP pocket. Residue Thr-26 coordinates Mg(2+). Residues 60–64 (GITIS) form a G2 region. Residues 81–84 (DCPG) form a G3 region. GTP contacts are provided by residues 81–85 (DCPGH) and 136–139 (NKCD). The segment at 136 to 139 (NKCD) is G4. The segment at 174–176 (SAL) is G5.

Belongs to the TRAFAC class translation factor GTPase superfamily. Classic translation factor GTPase family. EF-Tu/EF-1A subfamily. As to quaternary structure, monomer.

Its subcellular location is the cytoplasm. It catalyses the reaction GTP + H2O = GDP + phosphate + H(+). Functionally, GTP hydrolase that promotes the GTP-dependent binding of aminoacyl-tRNA to the A-site of ribosomes during protein biosynthesis. The sequence is that of Elongation factor Tu from Bacillus anthracis (strain A0248).